A 94-amino-acid polypeptide reads, in one-letter code: Putative pterin-4-alpha-carbinolamine dehydratase (94 aa).

This sequence belongs to the pterin-4-alpha-carbinolamine dehydratase family.

The catalysed reaction is (4aS,6R)-4a-hydroxy-L-erythro-5,6,7,8-tetrahydrobiopterin = (6R)-L-erythro-6,7-dihydrobiopterin + H2O. This Chloroflexus aggregans (strain MD-66 / DSM 9485) protein is Putative pterin-4-alpha-carbinolamine dehydratase.